A 242-amino-acid chain; its full sequence is uncharacterized protein (242 aa).

Residues 1 to 11 (MNFEAASAPSQ) are compositionally biased toward low complexity. The segment at 1 to 45 (MNFEAASAPSQQPSPTPAPKTEEPKENGGSEQQADQPENSKKDDV) is disordered.

This sequence to U.parvum UU171.

This is an uncharacterized protein from Ureaplasma parvum serovar 3 (strain ATCC 700970).